The chain runs to 758 residues: Calpain (758 aa).

The Calpain catalytic domain maps to Leu99–Gly397. Active-site residues include Cys154, His313, and Asn337. Residues Leu398–Glu562 form a domain III region. The tract at residues Asp563 to Thr582 is linker. A domain IV region spans residues Leu583 to Tyr757. Residues Asp641, Asn643, Thr645, His647, Glu652, Asp671, Asp673, Ser675, Tyr677, and Glu682 each contribute to the Ca(2+) site. 2 EF-hand domains span residues Ile658–His693 and Val694–Ala729.

Belongs to the peptidase C2 family.

Activated by free cytoplasmic calcium. Calpains are calcium-activated non-lysosomal thiol-proteases. This Schistosoma mansoni (Blood fluke) protein is Calpain.